A 385-amino-acid polypeptide reads, in one-letter code: 4-hydroxy-3-methylbut-2-en-1-yl diphosphate synthase (flavodoxin) (385 aa).

C280, C283, C315, and E322 together coordinate [4Fe-4S] cluster.

This sequence belongs to the IspG family. [4Fe-4S] cluster serves as cofactor.

It catalyses the reaction (2E)-4-hydroxy-3-methylbut-2-enyl diphosphate + oxidized [flavodoxin] + H2O + 2 H(+) = 2-C-methyl-D-erythritol 2,4-cyclic diphosphate + reduced [flavodoxin]. It functions in the pathway isoprenoid biosynthesis; isopentenyl diphosphate biosynthesis via DXP pathway; isopentenyl diphosphate from 1-deoxy-D-xylulose 5-phosphate: step 5/6. Its function is as follows. Converts 2C-methyl-D-erythritol 2,4-cyclodiphosphate (ME-2,4cPP) into 1-hydroxy-2-methyl-2-(E)-butenyl 4-diphosphate. In Streptomyces griseus subsp. griseus (strain JCM 4626 / CBS 651.72 / NBRC 13350 / KCC S-0626 / ISP 5235), this protein is 4-hydroxy-3-methylbut-2-en-1-yl diphosphate synthase (flavodoxin).